Consider the following 79-residue polypeptide: U24-theraphotoxin-Cg1a (79 aa).

Positions 1-19 (MRVLFIIAVLALISVGCYA) are cleaved as a signal peptide. Residues 20–44 (SEMKDRSSRNEVLSAIFAIEEPQER) constitute a propeptide that is removed on maturation. 3 disulfide bridges follow: cysteine 46/cysteine 61, cysteine 53/cysteine 66, and cysteine 60/cysteine 73. Tryptophan 78 is subject to Tryptophan amide.

This sequence belongs to the neurotoxin 10 (Hwtx-1) family. 35 (Jztx-27) subfamily. Expressed by the venom gland.

It localises to the secreted. Functionally, probable ion channel inhibitor. This is U24-theraphotoxin-Cg1a from Chilobrachys guangxiensis (Chinese earth tiger tarantula).